Consider the following 134-residue polypeptide: Profilin-3 (134 aa).

Cysteines 13 and 118 form a disulfide. The Involved in PIP2 interaction signature appears at 84–100 (AVIRGKKGSGGITIKKT). Thr-114 is modified (phosphothreonine).

It belongs to the profilin family. Occurs in many kinds of cells as a complex with monomeric actin in a 1:1 ratio. Phosphorylated by MAP kinases.

Its subcellular location is the cytoplasm. The protein resides in the cytoskeleton. Binds to actin and affects the structure of the cytoskeleton. At high concentrations, profilin prevents the polymerization of actin, whereas it enhances it at low concentrations. The chain is Profilin-3 from Olea europaea (Common olive).